A 152-amino-acid polypeptide reads, in one-letter code: MALNQLSLSLQFARDAEATAHRATLPRHAVARWIRHALAVDAEITVRIVGAEEGQRLNREFRHKDYATNVLTFDYQQEPVAVADLVLCAPVVEREAREQNKTLEEHYAHLLVHGTLHAQGWDHETSEQDAQEMEAYETAILQELGFADPYAA.

Residues histidine 113, histidine 117, and histidine 123 each contribute to the Zn(2+) site.

It belongs to the endoribonuclease YbeY family. It depends on Zn(2+) as a cofactor.

It localises to the cytoplasm. In terms of biological role, single strand-specific metallo-endoribonuclease involved in late-stage 70S ribosome quality control and in maturation of the 3' terminus of the 16S rRNA. The chain is Endoribonuclease YbeY from Acidovorax sp. (strain JS42).